Reading from the N-terminus, the 61-residue chain is Small ribosomal subunit protein uS14 (61 aa).

Zn(2+)-binding residues include C24, C27, C40, and C43.

It belongs to the universal ribosomal protein uS14 family. Zinc-binding uS14 subfamily. In terms of assembly, part of the 30S ribosomal subunit. Contacts proteins S3 and S10. The cofactor is Zn(2+).

Its function is as follows. Binds 16S rRNA, required for the assembly of 30S particles and may also be responsible for determining the conformation of the 16S rRNA at the A site. This chain is Small ribosomal subunit protein uS14, found in Herpetosiphon aurantiacus (strain ATCC 23779 / DSM 785 / 114-95).